Reading from the N-terminus, the 512-residue chain is Oxalate--CoA ligase (512 aa).

Residue 168–179 (HTSGTTGRPKVV) coordinates ATP. Residues Ser-283 and Ser-284 each carry the phosphoserine modification. The FACS motif lies at 381–429 (DRFFRTGDEGKLDKDGYVFITGRIKELVNRGGEKISPAEIDAVLMQHPD). A Microbody targeting signal motif is present at residues 510–512 (AKL).

Belongs to the ATP-dependent AMP-binding enzyme family.

Its subcellular location is the peroxisome matrix. The protein localises to the peroxisome membrane. The catalysed reaction is oxalate + ATP + CoA = oxalyl-CoA + AMP + diphosphate. Its function is as follows. Catalyzes the first step in a degradation pathway of oxalate to CO(2) to protect the cell against the harmful effects of oxalate derived from endogenous processes or an environmental sources. The polypeptide is Oxalate--CoA ligase (pcs60) (Schizosaccharomyces pombe (strain 972 / ATCC 24843) (Fission yeast)).